A 192-amino-acid polypeptide reads, in one-letter code: Xanthine phosphoribosyltransferase (192 aa).

Positions 20 and 27 each coordinate xanthine. 128 to 132 (ANGDA) is a 5-phospho-alpha-D-ribose 1-diphosphate binding site. K156 contributes to the xanthine binding site.

It belongs to the purine/pyrimidine phosphoribosyltransferase family. Xpt subfamily. As to quaternary structure, homodimer.

The protein resides in the cytoplasm. The catalysed reaction is XMP + diphosphate = xanthine + 5-phospho-alpha-D-ribose 1-diphosphate. It functions in the pathway purine metabolism; XMP biosynthesis via salvage pathway; XMP from xanthine: step 1/1. Functionally, converts the preformed base xanthine, a product of nucleic acid breakdown, to xanthosine 5'-monophosphate (XMP), so it can be reused for RNA or DNA synthesis. The polypeptide is Xanthine phosphoribosyltransferase (Staphylococcus aureus (strain Mu3 / ATCC 700698)).